Reading from the N-terminus, the 386-residue chain is Epoxyqueuosine reductase (386 aa).

Residues Arg-57, Cys-97, Asp-134, 139 to 141 (SDR), Ser-152, Asn-155, Ile-158, and Leu-169 contribute to the cob(II)alamin site. Asp-134 serves as the catalytic Proton donor. In terms of domain architecture, 4Fe-4S ferredoxin-type spans 178–208 (FEPDVPIEDMCGSCTKCLDACPTGALVNPGQ). Positions 188, 191, 194, 198, and 214 each coordinate [4Fe-4S] cluster. Ser-216 is a cob(II)alamin binding site. Gln-220 and Lys-222 together coordinate tRNA. Residues Cys-240, Cys-243, and Cys-247 each coordinate [4Fe-4S] cluster. 240-241 (CD) lines the cob(II)alamin pocket. TRNA-binding residues include Asn-280, Arg-281, Arg-295, Lys-297, and Lys-298. The HEAT-like PBS-type repeat unit spans residues 333–357 (RGTAAWAIGKIGDPAYAEELEKALE).

The protein belongs to the QueG family. Monomer. Cob(II)alamin is required as a cofactor. Requires [4Fe-4S] cluster as cofactor.

Its subcellular location is the cytoplasm. It catalyses the reaction epoxyqueuosine(34) in tRNA + AH2 = queuosine(34) in tRNA + A + H2O. It functions in the pathway tRNA modification; tRNA-queuosine biosynthesis. Its function is as follows. Catalyzes the conversion of epoxyqueuosine (oQ) to queuosine (Q), which is a hypermodified base found in the wobble positions of tRNA(Asp), tRNA(Asn), tRNA(His) and tRNA(Tyr). In Bacillus subtilis (strain 168), this protein is Epoxyqueuosine reductase.